The following is a 284-amino-acid chain: HTH-type transcriptional activator RhaR (284 aa).

The region spanning 181–279 (DMLMNALRAS…GVSPSAYRQR (99 aa)) is the HTH araC/xylS-type domain. DNA-binding regions (H-T-H motif) lie at residues 198–219 (EAFC…KEQT) and 246–269 (IGDI…HQAF).

As to quaternary structure, binds DNA as a dimer.

Its subcellular location is the cytoplasm. In terms of biological role, activates expression of the rhaSR operon in response to L-rhamnose. In Pectobacterium carotovorum subsp. carotovorum (strain PC1), this protein is HTH-type transcriptional activator RhaR.